The sequence spans 443 residues: Glucose-6-phosphate isomerase (443 aa).

Catalysis depends on glutamate 285, which acts as the Proton donor. Residues histidine 306 and lysine 420 contribute to the active site.

Belongs to the GPI family.

The protein localises to the cytoplasm. The catalysed reaction is alpha-D-glucose 6-phosphate = beta-D-fructose 6-phosphate. The protein operates within carbohydrate biosynthesis; gluconeogenesis. Its pathway is carbohydrate degradation; glycolysis; D-glyceraldehyde 3-phosphate and glycerone phosphate from D-glucose: step 2/4. Its function is as follows. Catalyzes the reversible isomerization of glucose-6-phosphate to fructose-6-phosphate. This Staphylococcus aureus (strain Mu3 / ATCC 700698) protein is Glucose-6-phosphate isomerase.